A 1523-amino-acid polypeptide reads, in one-letter code: MAALAAGGYTRSDTIEKLSSVMAGVPARRNQSSPPPAPPLCLRRRTRLAAAPEDTVQNRVTLEKVLGITAQNSSGLTCDPGTGHVAYLAGCVVVVLNPKENKQQHIFNTTRKSLSALAFSPDGKYIVTGENGHRPTVRIWDVEEKTQVAEMLGHKYGVACVAFSPNMKHIVSMGYQHDMVLNVWDWKKDIVVASNKVSCRVIALSFSEDSSYFVTVGNRHVRFWFLEASTEAKVTSTVPLVGRSGILGELHNNIFCGVACGRGRMAGNTFCVSYSGLLCQFNEKRVLDKWINLKVSLSSCLCVSDELIFCGCTDGIVRIFQAHSLLYLTNLPKPHYLGVDVAHGLDSSFLFHRKAEAVYPDTVALTFDPVHQWLSCVYKDHSIYIWDVKDIDEVSKIWSELFHSSFVWNVEVYPEFEDQRACLPSGTFLTCSSDNTIRFWNLDSASDTRWQKNIFSDSLLKVVYVENDIQHLQDLSHFPDRGSENGTPMDMKAGVRVMQVSPDGQHLASGDRSGNLRIHELHFMDELIKVEAHDAEVLCLEYSKPETGVTLLASASRDRLIHVLNVEKNYNLEQTLDDHSSSITAIKFAGTRDVQMISCGADKSIYFRSAQQASDGLHFVRTHHVAEKTTLYDMDIDITQKYVAVACQDRNVRVYNTVSGKQKKCYKGSQGDEGSLLKVHVDPSGTFLATSCSDKSISLIDFYSGECVAKMFGHSEIVTGMKFTYDCRHLITVSGDSCVFIWHLGPEITTCMKQHLLEINHQEQQQQPKDQKWSGPPSQETYASTPSEIRSLSPGEQTEDEMEEECEPEELLKTPSKDSLDPDPRCLLTNGKLPLWAKRLLGDDDVADSSAFHAKRSYQPHGRWAERAEQEPLKTILDAWSLDSYFTPMKPENLQDSVLDSVEPQNLAGLLSECSLGNGHTSPGEGLVSYLLHPELGSPKEDNRGHPSYLPLQREATEASELILCSPEAEVSLTGMHREYYEEETEAGPEDQQGDTYLRVSSVSSKDQSPPEDSGESEAELECSFAAAHSSAPQTDPGPHLTMTAGKPEYPSTEELSQPELPGLGNGSLPQTPEQEKFLRHHFETLTDAPTEELFHGSLGDIKISETEDYFFNPRLSISTQFLSRLQKTSRCPPRLPLHLMKSPEAQPVGQGGNQPKAGPLRAGTGYMSSDGTNVLSGQKAEETQEALSLLDRKPPTPTSVLTTGREQSISAPSSCSYLESTTSSHAKTTRSISLGDSEGPVTAELPQSLHKPLSPGQELQAIPTTVALTSSIKDHEPAPLSWGNHEARASLKLTLSSVCEQLLSPPPQEPPITHVWSQEPVDVPPSMAVTVASFCAPSPVDMSTLGLHSSMFLPKTSASGPLTPPAHLQLLETRSRVPGSTAALLEPTPDASGVIADSPGHWDTEVPTPELLGSVESVLHRLQTAFQEALDLYRMLVSSSQLGPEQQQAQTELASTFHWILNQLEASNCMAAANLAPPQTLPSPDPLSLPTLCPLASPNLQALLEHYSELLVQAVRRKARGD.

Residue A2 is modified to N-acetylalanine. Residue S33 is modified to Phosphoserine. T46 is subject to Phosphothreonine. 12 WD repeats span residues 109 to 150 (TTRK…QVAE), 153 to 194 (GHKY…VVAS), 196 to 234 (KVSCRVIALSFSEDSSYFVTVGNRHVRFWFLEASTEAKV), 291 to 330 (INLKVSLSSCLCVSDELIFCGCTDGIVRIFQAHSLLYLTN), 357 to 396 (AVYPDTVALTFDPVHQWLSCVYKDHSIYIWDVKDIDEVSK), 411 to 450 (EVYPEFEDQRACLPSGTFLTCSSDNTIRFWNLDSASDTRW), 490 to 529 (DMKAGVRVMQVSPDGQHLASGDRSGNLRIHELHFMDELIK), 532 to 574 (AHDA…NLEQ), 578 to 618 (DHSS…DGLH), 626 to 665 (AEKTTLYDMDIDITQKYVAVACQDRNVRVYNTVSGKQKKC), 671 to 713 (GDEG…KMFG), and 714 to 752 (HSEIVTGMKFTYDCRHLITVSGDSCVFIWHLGPEITTCM). A Phosphoserine modification is found at S501. The disordered stretch occupies residues 762 to 824 (QEQQQQPKDQ…PSKDSLDPDP (63 aa)). Polar residues predominate over residues 776-790 (PPSQETYASTPSEIR). Over residues 797-809 (QTEDEMEEECEPE) the composition is skewed to acidic residues. The stretch at 803 to 846 (EEECEPEELLKTPSKDSLDPDPRCLLTNGKLPLWAKRLLGDDDV) is one WD 13 repeat. Over residues 810 to 824 (ELLKTPSKDSLDPDP) the composition is skewed to basic and acidic residues. A phosphoserine mark is found at S966 and S972. Positions 1000–1072 (VSSVSSKDQS…GLGNGSLPQT (73 aa)) are disordered. T1072 carries the post-translational modification Phosphothreonine. Residues S1117, S1143, and S1169 each carry the phosphoserine modification. The disordered stretch occupies residues 1143–1258 (SPEAQPVGQG…SLHKPLSPGQ (116 aa)). 2 stretches are compositionally biased toward polar residues: residues 1167-1177 (YMSSDGTNVLS) and 1199-1213 (TSVLTTGREQSISAP). Residues 1214–1225 (SSCSYLESTTSS) show a composition bias toward low complexity. The span at 1226–1235 (HAKTTRSISL) shows a compositional bias: polar residues. S1234 is subject to Phosphoserine.

As to quaternary structure, can form homodimers (via C-terminus). Interacts (via C-terminus) with MAPKBP1 (via C-terminus). Interacts with CDK5RAP2, CEP152, CEP63 and KIAA0753. CEP63, CDK5RAP2, CEP152, WDR62 are proposed to form a stepwise assembled complex at the centrosome forming a ring near parental centrioles. Prominent in neural crest lineages from 9.5 dpc to 11.5 dpc. Also expressed in the ventricular and subventricular zones during the period of cerebral cortical neurogenesis (11.5-16.5 dpc), with expression decreasing in intensity by 17.5 dpc. In the cerebellum, it is strongly expressed in precursors of granule neurons at late embryonic and early postnatal stages; by postnatal day 9 (P9). Present in fetal brain, enriched within the ventricular and subventricular zone (at protein level).

The protein resides in the nucleus. Its subcellular location is the cytoplasm. It localises to the cytoskeleton. It is found in the spindle pole. The protein localises to the microtubule organizing center. The protein resides in the centrosome. Its subcellular location is the centriole. In terms of biological role, required for cerebral cortical development. Plays a role in neuronal proliferation and migration. Plays a role in mother-centriole-dependent centriole duplication; the function seems also to involve CEP152, CDK5RAP2 and CEP63 through a stepwise assembled complex at the centrosome that recruits CDK2 required for centriole duplication. The protein is WD repeat-containing protein 62 (Wdr62) of Mus musculus (Mouse).